The following is a 559-amino-acid chain: Glucose-6-phosphate isomerase 4 (559 aa).

Catalysis depends on Glu-356, which acts as the Proton donor. Residues His-387 and Lys-513 contribute to the active site.

Belongs to the GPI family.

It localises to the cytoplasm. The enzyme catalyses alpha-D-glucose 6-phosphate = beta-D-fructose 6-phosphate. The protein operates within carbohydrate biosynthesis; gluconeogenesis. Its pathway is carbohydrate degradation; glycolysis; D-glyceraldehyde 3-phosphate and glycerone phosphate from D-glucose: step 2/4. Its function is as follows. Catalyzes the reversible isomerization of glucose-6-phosphate to fructose-6-phosphate. The sequence is that of Glucose-6-phosphate isomerase 4 from Rhodococcus jostii (strain RHA1).